The chain runs to 356 residues: Tyrosine recombinase XerS (356 aa).

One can recognise a Core-binding (CB) domain in the interval Ile-16 to Thr-121. A Tyr recombinase domain is found at Ala-169 to Asp-354. Residues Arg-210, Lys-234, His-306, Arg-309, and His-332 contribute to the active site. Tyr-341 (O-(3'-phospho-DNA)-tyrosine intermediate) is an active-site residue.

The protein belongs to the 'phage' integrase family. XerS subfamily.

The protein resides in the cytoplasm. Its activity is regulated as follows. FtsK is required for recombination. Functionally, site-specific tyrosine recombinase, which acts by catalyzing the cutting and rejoining of the recombining DNA molecules. Essential to convert dimers of the bacterial chromosome into monomers to permit their segregation at cell division. The polypeptide is Tyrosine recombinase XerS (Streptococcus pyogenes serotype M49 (strain NZ131)).